Here is a 380-residue protein sequence, read N- to C-terminus: Heme A synthase (380 aa).

Helical transmembrane passes span 36-56 (IRAWLAVLFALVVAMIVVGGL), 125-145 (VIGLVWALGFFGFLLARKIPA), 151-171 (LILPGVLGGVQGAVGAWMVAS), 187-207 (LATHLGLAFVILGLLAWSILQ), 227-247 (FGLATGWLHLAFLQILIGALV), 287-307 (LVQFIHRIVGYLLLAYGVMVW), 320-340 (FAFNAGFAALSLQVVLGIVTV), and 344-364 (APWQIAILHQLLAVGVFVLIL). His292 provides a ligand contact to heme. His352 contacts heme.

This sequence belongs to the COX15/CtaA family. Type 2 subfamily. As to quaternary structure, interacts with CtaB. Heme b serves as cofactor.

It is found in the cell membrane. The catalysed reaction is Fe(II)-heme o + 2 A + H2O = Fe(II)-heme a + 2 AH2. Its pathway is porphyrin-containing compound metabolism; heme A biosynthesis; heme A from heme O: step 1/1. Its function is as follows. Catalyzes the conversion of heme O to heme A by two successive hydroxylations of the methyl group at C8. The first hydroxylation forms heme I, the second hydroxylation results in an unstable dihydroxymethyl group, which spontaneously dehydrates, resulting in the formyl group of heme A. This chain is Heme A synthase, found in Ruegeria pomeroyi (strain ATCC 700808 / DSM 15171 / DSS-3) (Silicibacter pomeroyi).